Reading from the N-terminus, the 229-residue chain is Transcriptional regulatory protein CreB (229 aa).

A Response regulatory domain is found at 5–119 (TVWLVEDEQG…EVCARVRTLL (115 aa)). At D54 the chain carries 4-aspartylphosphate. The ompR/PhoB-type DNA-binding region spans 129–228 (SPVIRIGHFE…HRGMGYSLRG (100 aa)).

In terms of processing, phosphorylated by CreC.

It is found in the cytoplasm. Its function is as follows. Member of the two-component regulatory system CreC/CreB involved in catabolic regulation. This is Transcriptional regulatory protein CreB (creB) from Escherichia coli (strain K12).